Reading from the N-terminus, the 397-residue chain is Cell division protein DivIB (397 aa).

Residues 1–138 (MTTKDKGDQK…RIERIHLYRA (138 aa)) are Cytoplasmic-facing. The span at 24 to 37 (QEYLEKKSQEKASE) shows a compositional bias: basic and acidic residues. The tract at residues 24 to 115 (QEYLEKKSQE…DRTEKFIGQA (92 aa)) is disordered. Residues 74–103 (ASDDDETNESEESEDVEEPEEENIEESSDV) show a composition bias toward acidic residues. A helical membrane pass occupies residues 139–159 (LPVLVISSLLILLSLYFITPL). Residues 160–231 (GSLKNLVVTG…ITFKIQVTEY (72 aa)) enclose the POTRA domain. Topologically, residues 160–397 (GSLKNLVVTG…PSDVTDETNN (238 aa)) are extracellular. A disordered region spans residues 360 to 397 (LVQKEEQDQEQEKEESSEETVPGETEAAPSDVTDETNN). Acidic residues predominate over residues 366–377 (QDQEQEKEESSE).

Belongs to the FtsQ/DivIB family. DivIB subfamily.

Its subcellular location is the cell membrane. Its function is as follows. Cell division protein that may be involved in stabilizing or promoting the assembly of the division complex. This is Cell division protein DivIB from Streptococcus gordonii (strain Challis / ATCC 35105 / BCRC 15272 / CH1 / DL1 / V288).